The chain runs to 259 residues: Type III pantothenate kinase (259 aa).

6–13 contacts ATP; that stretch reads DAGNTNIV. Substrate is bound by residues Tyr100 and 107–110; that span reads GADR. The active-site Proton acceptor is Asp109. Asp129 lines the K(+) pocket. Thr132 contacts ATP. Thr184 contributes to the substrate binding site.

Belongs to the type III pantothenate kinase family. In terms of assembly, homodimer. The cofactor is NH4(+). It depends on K(+) as a cofactor.

Its subcellular location is the cytoplasm. The enzyme catalyses (R)-pantothenate + ATP = (R)-4'-phosphopantothenate + ADP + H(+). Its pathway is cofactor biosynthesis; coenzyme A biosynthesis; CoA from (R)-pantothenate: step 1/5. In terms of biological role, catalyzes the phosphorylation of pantothenate (Pan), the first step in CoA biosynthesis. In Clostridium novyi (strain NT), this protein is Type III pantothenate kinase.